The following is a 199-amino-acid chain: uncharacterized protein (199 aa).

This is an uncharacterized protein from Borreliella burgdorferi (strain ATCC 35210 / DSM 4680 / CIP 102532 / B31) (Borrelia burgdorferi).